The sequence spans 765 residues: Ubiquitin-like modifier-activating enzyme atg7 (765 aa).

Positions 436-441 (GAGTLG) match the GXGXXG motif motif. Cys-616 acts as the Glycyl thioester intermediate in catalysis. Disordered regions lie at residues 646-670 (AAPA…PPNH) and 744-765 (AAND…PELL). The homodimerization stretch occupies residues 721–760 (ALTEKDYITELSGLAEVQRKAEAAANDVEWDSDEEGMEDE). The span at 748-765 (VEWDSDEEGMEDEEPELL) shows a compositional bias: acidic residues.

Belongs to the ATG7 family. In terms of assembly, homodimer. Interacts with ATG8 through a thioester bond between Cys-616 and the C-terminal Gly of ATG8 and with ATG12 through a thioester bond between Cys-616 and the C-terminal Gly of ATG12. Also interacts with ATG3.

Its subcellular location is the cytoplasm. It localises to the preautophagosomal structure. Its function is as follows. E1-like activating enzyme involved in the 2 ubiquitin-like systems required for cytoplasm to vacuole transport (Cvt) and autophagy. Activates ATG12 for its conjugation with ATG5 and ATG8 for its conjugation with phosphatidylethanolamine. Both systems are needed for the ATG8 association to Cvt vesicles and autophagosomes membranes. Autophagy is essential for maintenance of amino acid levels and protein synthesis under nitrogen starvation. Required for selective autophagic degradation of the nucleus (nucleophagy) as well as for mitophagy which contributes to regulate mitochondrial quantity and quality by eliminating the mitochondria to a basal level to fulfill cellular energy requirements and preventing excess ROS production. Required for normal mycelial growth and conidiogenesis, and regulates sclerotial formation. Plays an essential role in pathogenesis. The protein is Ubiquitin-like modifier-activating enzyme atg7 of Botryotinia fuckeliana (strain BcDW1) (Noble rot fungus).